The chain runs to 902 residues: Cytosolic carboxypeptidase 2 (902 aa).

Residues 396–666 (YPYTYTDLQC…HVCDTLLDFC (271 aa)) enclose the Peptidase M14 domain. Zn(2+) contacts are provided by H462, E465, and H558. E630 (proton donor/acceptor) is an active-site residue. Positions 746–758 (FKKKKKKSLQTRK) are enriched in basic residues. Disordered regions lie at residues 746 to 770 (FKKK…KNLM) and 796 to 879 (FKNS…PRSR). Positions 853–866 (VSCSPKRTINSSQE) are enriched in polar residues.

It belongs to the peptidase M14 family. Interacts with RARRES1, KIF11 AND MAPRE1. The cofactor is Zn(2+).

It is found in the cytoplasm. Its subcellular location is the cytosol. The protein localises to the cytoskeleton. The protein resides in the microtubule organizing center. It localises to the centrosome. It is found in the centriole. Its subcellular location is the cilium basal body. The enzyme catalyses (L-glutamyl)(n+1)-gamma-L-glutamyl-L-glutamyl-[protein] + H2O = (L-glutamyl)(n)-gamma-L-glutamyl-L-glutamyl-[protein] + L-glutamate. Inhibited by RARRES1. In terms of biological role, metallocarboxypeptidase that mediates deglutamylation of tubulin and non-tubulin target proteins. Catalyzes the removal of polyglutamate side chains present on the gamma-carboxyl group of glutamate residues within the C-terminal tail of tubulin protein. Specifically cleaves tubulin long-side-chains, while it is not able to remove the branching point glutamate. Also catalyzes the removal of polyglutamate residues from the carboxy-terminus of non-tubulin proteins such as MYLK. The sequence is that of Cytosolic carboxypeptidase 2 from Homo sapiens (Human).